A 313-amino-acid chain; its full sequence is uncharacterized protein (313 aa).

2 disordered regions span residues 24–53 (EEGE…PTPN) and 190–291 (TALS…PCAR). A compositionally biased stretch (polar residues) spans 211–229 (TQNYVLKLQLSSPNSQPMS). Over residues 239-260 (SCSSSNCSSSSSSSACSSVSIS) the composition is skewed to low complexity. Residues 261 to 284 (DPNNITAYETNNVNPQFPSNQPLD) are compositionally biased toward polar residues.

This is an uncharacterized protein from Saccharomyces cerevisiae (strain ATCC 204508 / S288c) (Baker's yeast).